Consider the following 251-residue polypeptide: uncharacterized protein (251 aa).

The next 4 helical transmembrane spans lie at 56-76 (LAVV…TLVA), 104-124 (IITV…FLLT), 184-204 (HGFV…LIIV), and 208-228 (YLIA…ANIS).

The protein resides in the membrane. This is an uncharacterized protein from Caenorhabditis elegans.